A 298-amino-acid polypeptide reads, in one-letter code: GTPase Era (298 aa).

An Era-type G domain is found at Arg-8–Glu-176. The G1 stretch occupies residues Gly-16 to Ser-23. A GTP-binding site is contributed by Gly-16–Ser-23. The interval Gln-42 to His-46 is G2. A G3 region spans residues Asp-63 to Gly-66. GTP is bound by residues Asp-63–Leu-67 and Asn-125–Asp-128. Residues Asn-125–Asp-128 form a G4 region. The interval Val-155–Ala-157 is G5. The region spanning Val-199–Lys-283 is the KH type-2 domain.

It belongs to the TRAFAC class TrmE-Era-EngA-EngB-Septin-like GTPase superfamily. Era GTPase family. As to quaternary structure, monomer.

The protein resides in the cytoplasm. It localises to the cell inner membrane. Its function is as follows. An essential GTPase that binds both GDP and GTP, with rapid nucleotide exchange. Plays a role in 16S rRNA processing and 30S ribosomal subunit biogenesis and possibly also in cell cycle regulation and energy metabolism. The polypeptide is GTPase Era (Xylella fastidiosa (strain Temecula1 / ATCC 700964)).